The sequence spans 159 residues: MNKNTQGKPSGKPVRRDGVDPVLRSRARRRAVQAIYAWQISGGNAQSLIAQFAHEQAREIADLAYFEALMHGVLDNRRDIDEALGPYLDRGIEEVDAIERAVLRLAGYELRYRLDVPYRVVINEAIESAKRFGSEHGHTYVNGVLDRAAVELRKVESGH.

Residues 1 to 20 (MNKNTQGKPSGKPVRRDGVD) form a disordered region.

It belongs to the NusB family.

Its function is as follows. Involved in transcription antitermination. Required for transcription of ribosomal RNA (rRNA) genes. Binds specifically to the boxA antiterminator sequence of the ribosomal RNA (rrn) operons. The sequence is that of Transcription antitermination protein NusB from Stenotrophomonas maltophilia (strain R551-3).